We begin with the raw amino-acid sequence, 186 residues long: Probable RNA 2'-phosphotransferase (186 aa).

This sequence belongs to the KptA/TPT1 family.

Removes the 2'-phosphate from RNA via an intermediate in which the phosphate is ADP-ribosylated by NAD followed by a presumed transesterification to release the RNA and generate ADP-ribose 1''-2''-cyclic phosphate (APPR&gt;P). May function as an ADP-ribosylase. The sequence is that of Probable RNA 2'-phosphotransferase from Hahella chejuensis (strain KCTC 2396).